A 270-amino-acid polypeptide reads, in one-letter code: Malonyl-[acyl-carrier protein] O-methyltransferase (270 aa).

It belongs to the methyltransferase superfamily.

The enzyme catalyses malonyl-[ACP] + S-adenosyl-L-methionine = malonyl-[ACP] methyl ester + S-adenosyl-L-homocysteine. It participates in cofactor biosynthesis; biotin biosynthesis. Its function is as follows. Converts the free carboxyl group of a malonyl-thioester to its methyl ester by transfer of a methyl group from S-adenosyl-L-methionine (SAM). It allows to synthesize pimeloyl-ACP via the fatty acid synthetic pathway. This Marinomonas sp. (strain MWYL1) protein is Malonyl-[acyl-carrier protein] O-methyltransferase.